Here is a 201-residue protein sequence, read N- to C-terminus: Ras-related protein Rab-10 (201 aa).

Residue 16 to 23 (GDSGVGKT) participates in GTP binding. An Effector region motif is present at residues 38–46 (FISTIGIDF). GTP contacts are provided by residues 64-68 (DTAGQ), 122-125 (NKCD), and 152-154 (SAK). The disordered stretch occupies residues 175–201 (PDSTDEQSRDTVNPVQPQRQSSSGGCC). Positions 184-201 (DTVNPVQPQRQSSSGGCC) are enriched in polar residues. S-geranylgeranyl cysteine attachment occurs at residues Cys-200 and Cys-201.

The protein belongs to the small GTPase superfamily. Rab family. As to quaternary structure, interacts (GTP-bound form) with ehbp-1 (via C-terminal coiled coil). Interacts (GTP-bound form) with cnt-1 (via C-terminal ankyrin repeat). Interacts (GTP-bound form) with rab-5 GAP, tbc-2 (via putative coiled coil domain). Interacts (GTP-bound form) with amph-1. In terms of tissue distribution, almost ubiquitously expressed. Expressed in intestine, hypodermis, seam cells, body-wall muscles, many neurons, oviduct sheath cell, spermatheca, coelomocytes and pharyngeal and nerve ring.

The protein localises to the early endosome membrane. It localises to the late endosome membrane. It is found in the golgi apparatus membrane. Its subcellular location is the endosome membrane. It carries out the reaction GTP + H2O = GDP + phosphate + H(+). Rab activation is generally mediated by a guanine exchange factor (GEF), while inactivation through hydrolysis of bound GTP is catalyzed by a GTPase activating protein (GAP). Tbc-4 is a likely GAP of this rab. Denn-4 is a putative GEF of this rab. The small GTPases Rab are key regulators of intracellular membrane trafficking, from the formation of transport vesicles to their fusion with membranes. Rabs cycle between an inactive GDP-bound form and an active GTP-bound form that is able to recruit to membranes different set of downstream effectors directly responsible for vesicle formation, movement, tethering and fusion. Required for basolateral endocytic recycling, the return of macromolecules and fluid from endosomes to the plasma membrane, in polarized epithelial cells of the intestine upstream of rme-1. Involved in the formation of the endosomal tubular network that is required for basolateral recycling of clathrin-independent endocytic cargo such as daf-4 in the intestine. Required for the recruitment of cnt-1 effector to endosomal membranes in the intestinal epithelium, which is important for the regulation of levels of endosomal phosphatidylinositol-4,5-bisphosphate, a key phosphoinositide in membrane traffic, and for the recruitment of endosomal membrane-bending proteins, rme-1 and sdpn-1. Recruits the rab-5 GTPase-activating protein tbc-2 to endosomes where it then inactivates rab-5 resulting in removal of rab-5 from membranes, which is necessary for cargo transport from early endosomes to recycling endosomes in the basolateral intestine. Regulates recycling of synaptic membrane AMPA glutamate receptor, glr-1, from intracellular endosomal compartments back to synapses in a cholesterol-dependent endocytosis pathway functioning after clathrin-independent endocytosis in command interneurons. Regulates neuropeptide release from dense core vesicles (DCVs) of cholinergic motoneurons in cooperation with rab-5. They reciprocally recruit each other's inactivating GAP molecule leading to local exclusion of one or the other rab protein at the Golgi-endosomal interphase at an essential stage during DCV sorting. Regulates membrane trafficking of membranes and dendrite proteins from the Golgi and/or endosomal compartments to plasma membrane during dendrite morphogenesis together with the exocyst complex in the multi-dendritic PVD sensory neurons acting in a cell-autonomous manner and requiring its GTPase activity. Functions cell-autonomously together with the exocyst complex to regulate dendrite morphogenesis and anterior-posterior patterning of the PVD neurons dendritic arbor by balancing the anterograde and retrograde transport via molecular motors unc-116 (kinesin heavy chain) and dhc-1 (dynein heavy chain) to appropriately transport branching factors, such as dma-1, to the specific subcellular regions of the developing dendrite in its GTPase activity-dependent manner. This Caenorhabditis elegans protein is Ras-related protein Rab-10.